The sequence spans 507 residues: Archaeal-type glutamate synthase [NADPH] (507 aa).

4Fe-4S ferredoxin-type domains are found at residues 10–39 and 41–70; these read FVVERDDYKCIRCLACVRVCSYGANFYDEN and NRVYTENTKCVGCHFCEAICPTEAITVRKN. C19, C22, C25, C29, C50, C53, C56, and C60 together coordinate [4Fe-4S] cluster.

The protein belongs to the glutamate synthase family. FMN serves as cofactor.

It catalyses the reaction 2 L-glutamate + NADP(+) = L-glutamine + 2-oxoglutarate + NADPH + H(+). In Thermotoga maritima (strain ATCC 43589 / DSM 3109 / JCM 10099 / NBRC 100826 / MSB8), this protein is Archaeal-type glutamate synthase [NADPH].